A 354-amino-acid polypeptide reads, in one-letter code: Release factor glutamine methyltransferase (354 aa).

Residues 174 to 178, Asp-197, and Asn-241 each bind S-adenosyl-L-methionine; that span reads GSGSG. 241-244 provides a ligand contact to substrate; it reads NPPY.

Belongs to the protein N5-glutamine methyltransferase family. PrmC subfamily.

The enzyme catalyses L-glutaminyl-[peptide chain release factor] + S-adenosyl-L-methionine = N(5)-methyl-L-glutaminyl-[peptide chain release factor] + S-adenosyl-L-homocysteine + H(+). Functionally, methylates the class 1 translation termination release factors RF1/PrfA and RF2/PrfB on the glutamine residue of the universally conserved GGQ motif. The sequence is that of Release factor glutamine methyltransferase from Fusobacterium nucleatum subsp. nucleatum (strain ATCC 25586 / DSM 15643 / BCRC 10681 / CIP 101130 / JCM 8532 / KCTC 2640 / LMG 13131 / VPI 4355).